We begin with the raw amino-acid sequence, 178 residues long: Large ribosomal subunit protein uL5 (178 aa).

The protein belongs to the universal ribosomal protein uL5 family. Part of the 50S ribosomal subunit; part of the 5S rRNA/L5/L18/L25 subcomplex. Contacts the 5S rRNA and the P site tRNA. Forms a bridge to the 30S subunit in the 70S ribosome.

This is one of the proteins that bind and probably mediate the attachment of the 5S RNA into the large ribosomal subunit, where it forms part of the central protuberance. In the 70S ribosome it contacts protein S13 of the 30S subunit (bridge B1b), connecting the 2 subunits; this bridge is implicated in subunit movement. Contacts the P site tRNA; the 5S rRNA and some of its associated proteins might help stabilize positioning of ribosome-bound tRNAs. The sequence is that of Large ribosomal subunit protein uL5 from Syntrophomonas wolfei subsp. wolfei (strain DSM 2245B / Goettingen).